The chain runs to 178 residues: CDP-archaeol synthase (178 aa).

Transmembrane regions (helical) follow at residues 3–23 (LLLL…ANAV), 56–76 (FFGI…VILY), 87–107 (LFGY…GDML), 123–145 (APIL…FYPL), and 150–169 (IVLL…IIAY).

This sequence belongs to the CDP-archaeol synthase family. Mg(2+) is required as a cofactor.

It is found in the cell membrane. The enzyme catalyses 2,3-bis-O-(geranylgeranyl)-sn-glycerol 1-phosphate + CTP + H(+) = CDP-2,3-bis-O-(geranylgeranyl)-sn-glycerol + diphosphate. It participates in membrane lipid metabolism; glycerophospholipid metabolism. Functionally, catalyzes the formation of CDP-2,3-bis-(O-geranylgeranyl)-sn-glycerol (CDP-archaeol) from 2,3-bis-(O-geranylgeranyl)-sn-glycerol 1-phosphate (DGGGP) and CTP. This reaction is the third ether-bond-formation step in the biosynthesis of archaeal membrane lipids. This chain is CDP-archaeol synthase, found in Methanococcus maripaludis (strain C6 / ATCC BAA-1332).